Consider the following 361-residue polypeptide: MEEISHHFGVVGASGVHGGHQHQHHHHPWGSSLSAIVAPPPPPQLQQQQTQAGGMAHTPLTLNTAAAAVGNPVLQLANGSLLDACGKAKEASASASYAADVEAIKAKIISHPHYSSLLAAYLDCQKVGAPPEVAARLTAVAQDLELRQRTALGVLGAATEPELDQFMEAYHEMLVKYREELTRPLQEAMEFLRRVETQLNTLSISGRSLRNILSSGSSEEDQEGSGGETELPEIDAHGVDQELKHHLLKKYSGYLSSLKQELSKKKKKGKLPKDARQQLLNWWELHYKWPYPSESQKVALAESTGLDLKQINNWFINQRKRHWKPSDEMQFVMMDGYHPTNAAAFYMDGHFINDGGLYRLG.

The disordered stretch occupies residues 11–48 (VGASGVHGGHQHQHHHHPWGSSLSAIVAPPPPPQLQQQ). A compositionally biased stretch (basic residues) spans 19 to 28 (GHQHQHHHHP). The ELK domain maps to 242-262 (ELKHHLLKKYSGYLSSLKQEL). A DNA-binding region (homeobox; TALE-type) is located at residues 263-326 (SKKKKKGKLP…NQRKRHWKPS (64 aa)).

Belongs to the TALE/KNOX homeobox family. Interacts with FTIP7. Expressed predominantly in shoot apices. Also found to a lesser extent in glumes.

It localises to the nucleus. The protein localises to the cytoplasm. In terms of biological role, transcription factor that regulates genes involved in development. May be involved in shoot formation during embryogenesis. Overexpression in transgenic plants causes altered leaf morphology. Regulates anther dehiscence via direct repression of the auxin biosynthetic gene YUCCA4. Binds to the DNA sequence 5'-TGAC-3' in the promoter of the YUCCA4 gene and represses its activity during anther development. Reduction of auxin levels at late stage of anther development, after meiosis of microspore mother cells, is necessary for normal anther dehiscence and seed setting. The polypeptide is Homeobox protein knotted-1-like 6 (OSH1) (Oryza sativa subsp. japonica (Rice)).